Here is a 200-residue protein sequence, read N- to C-terminus: Rubrerythrin (200 aa).

In terms of domain architecture, Ferritin-like diiron spans 12–155 (SIKGSKTEKH…ALLAHVEDGS (144 aa)). Fe(3+)-binding residues include glutamate 29, glutamate 62, glutamate 103, glutamate 106, glutamate 137, histidine 140, cysteine 167, cysteine 170, cysteine 183, and cysteine 186. The Rubredoxin-like domain maps to 162–200 (EIAWQCRNCGYVITSKKAPKLCPACAHPQAYFEPMKTNY).

Homodimer. Possesses two rubredoxin-like centers and two non-sulfur oxo-bridged di-iron centers per dimer. The cofactor is Fe(3+).

The protein resides in the cytoplasm. May provide oxidative stress protection via catalytic reduction of intracellular hydrogen peroxide. This Porphyromonas gingivalis (strain ATCC BAA-308 / W83) protein is Rubrerythrin (rbr).